We begin with the raw amino-acid sequence, 146 residues long: Hemoglobin subunit beta (146 aa).

V1 bears the N-acetylvaline mark. The Globin domain occupies H2–H146. Position 63 (H63) interacts with heme b. An N6-acetyllysine modification is found at K82. H92 is a heme b binding site. C93 carries the S-nitrosocysteine modification. Position 144 is an N6-acetyllysine (K144).

The protein belongs to the globin family. In terms of assembly, heterotetramer of two alpha chains and two beta chains. In terms of tissue distribution, red blood cells.

Its function is as follows. Involved in oxygen transport from the lung to the various peripheral tissues. This chain is Hemoglobin subunit beta (HBB), found in Mesocricetus brandti (Brandt's hamster).